A 544-amino-acid chain; its full sequence is Glucans biosynthesis protein G 1 (544 aa).

Positions 1–33 (MVSLLRCQSFKPSSIICSLALSAAFALSGTAFA) are cleaved as a signal peptide. The tract at residues 36-58 (SKPAENKPATPVVSPPKATAPSA) is disordered.

It belongs to the OpgD/OpgG family.

It is found in the periplasm. It functions in the pathway glycan metabolism; osmoregulated periplasmic glucan (OPG) biosynthesis. Functionally, involved in the biosynthesis of osmoregulated periplasmic glucans (OPGs). The polypeptide is Glucans biosynthesis protein G 1 (opgG1) (Shewanella oneidensis (strain ATCC 700550 / JCM 31522 / CIP 106686 / LMG 19005 / NCIMB 14063 / MR-1)).